We begin with the raw amino-acid sequence, 239 residues long: Diablo IAP-binding mitochondrial protein (239 aa).

A mitochondrion-targeting transit peptide spans 1–22 (MAVLKSWLSRSVTLLFRYRQCL). The IAP-binding signature appears at 56-60 (AVPIA). The disordered stretch occupies residues 217–239 (RQKTQEEGEERAESEQEAYLRED).

The protein belongs to the Smac/DIABLO protein family. In terms of assembly, homodimer. Interacts with BEX3. Interacts with BIRC2/c-IAP1 (via BIR3 domain). Interacts with BIRC6/BRUCE. Interacts with BIRC7/livin. Interacts with XIAP/BIRC4 (via BIR3 domain). Interacts with the monomeric and dimeric form of BIRC5/survivin. Interacts with AREL1 (via HECT domain); in the cytoplasm following induction of apoptosis. In terms of processing, ubiquitinated by BIRC7/livin. Ubiquitinated by BIRC6. Post-translationally, the precursor form is proteolytically cleaved by mitochondrial processing peptidase MPP to remove the transit peptide and produce an intermediate form. This is then processed by PARL to produce the mature cleaved form which is released from mitochondria into the cytosol in apoptotic cells.

Its subcellular location is the mitochondrion. It is found in the cytoplasm. The protein resides in the cytosol. Functionally, promotes apoptosis by activating caspases in the cytochrome c/Apaf-1/caspase-9 pathway. Acts by opposing the inhibitory activity of inhibitor of apoptosis proteins (IAP). Inhibits the activity of BIRC6/BRUCE by inhibiting its binding to caspases. In Pongo abelii (Sumatran orangutan), this protein is Diablo IAP-binding mitochondrial protein.